Here is a 41-residue protein sequence, read N- to C-terminus: Photosystem I reaction center subunit IX (41 aa).

Residues tyrosine 7–isoleucine 29 form a helical membrane-spanning segment.

The protein belongs to the PsaJ family.

The protein resides in the plastid. The protein localises to the chloroplast thylakoid membrane. Functionally, may help in the organization of the PsaE and PsaF subunits. In Heterosigma akashiwo (strain NIES-293 / 8280G21-1), this protein is Photosystem I reaction center subunit IX.